A 108-amino-acid chain; its full sequence is uncharacterized protein (108 aa).

3 cysteine pairs are disulfide-bonded: cysteine 44-cysteine 82, cysteine 60-cysteine 78, and cysteine 63-cysteine 91.

The protein belongs to the arthropod CHH/MIH/GIH/VIH hormone family.

This is an uncharacterized protein from Caenorhabditis elegans.